We begin with the raw amino-acid sequence, 217 residues long: MKFFVDTAETAEIAELAEAGLVDGVTTNPSLIAKSGRNFLEVVKEICDLVEGPVSAEVTALEAPAMIAEGKKLALLADNVVVKLPLTFEGLKACQALTAENIQTNVTLCFSANQGLLAAKAGATYVSPFIGRLDDLGVDGMELIANLRMIFDNYAFDTQILAASIRSADHIQQCALLGADVATAPPSVLKGLVKHQLTDKGLEAFMADWQKTGQSIL.

Residue Lys83 is the Schiff-base intermediate with substrate of the active site.

It belongs to the transaldolase family. Type 3B subfamily.

The protein resides in the cytoplasm. The enzyme catalyses D-sedoheptulose 7-phosphate + D-glyceraldehyde 3-phosphate = D-erythrose 4-phosphate + beta-D-fructose 6-phosphate. It participates in carbohydrate degradation; pentose phosphate pathway; D-glyceraldehyde 3-phosphate and beta-D-fructose 6-phosphate from D-ribose 5-phosphate and D-xylulose 5-phosphate (non-oxidative stage): step 2/3. Transaldolase is important for the balance of metabolites in the pentose-phosphate pathway. This Maricaulis maris (strain MCS10) (Caulobacter maris) protein is Probable transaldolase.